Consider the following 261-residue polypeptide: MIRVDGRAPAQMRPVYITRHYNKYAEGSALIEVGDTRVICTASIDNRVPTFLKGAGKGWVTAEFGMLPRATGVRGIRESVKGHPGGRSLEIQRLIGRSLRAVVDLPALGERTVILDCDVIQADGGTRTAAITGGFVALVDAMQTLVTEGVTPRLPVLDYVAATSVGLFEGEAVLDLCFAEDSAAEVDFNVVMTGTGRFVEVQGTGEGTTFERADVDRLLDLAVVGIRSLVEQQRAVLGSLAEEIGKRRGNQNGAAGTGDQK.

Phosphate is bound by residues Arg87 and 125–127; that span reads GTR.

Belongs to the RNase PH family. In terms of assembly, homohexameric ring arranged as a trimer of dimers.

It carries out the reaction tRNA(n+1) + phosphate = tRNA(n) + a ribonucleoside 5'-diphosphate. Functionally, phosphorolytic 3'-5' exoribonuclease that plays an important role in tRNA 3'-end maturation. Removes nucleotide residues following the 3'-CCA terminus of tRNAs; can also add nucleotides to the ends of RNA molecules by using nucleoside diphosphates as substrates, but this may not be physiologically important. Probably plays a role in initiation of 16S rRNA degradation (leading to ribosome degradation) during starvation. The chain is Ribonuclease PH from Desulforudis audaxviator (strain MP104C).